Here is a 437-residue protein sequence, read N- to C-terminus: tRNA(Ile2) 2-agmatinylcytidine synthetase TiaS (437 aa).

This sequence belongs to the TiaS family.

The protein localises to the cytoplasm. It catalyses the reaction cytidine(34) in tRNA(Ile2) + agmatine + ATP + H2O = 2-agmatinylcytidine(34) in tRNA(Ile2) + AMP + 2 phosphate + 2 H(+). Functionally, ATP-dependent agmatine transferase that catalyzes the formation of 2-agmatinylcytidine (agm2C) at the wobble position (C34) of tRNA(Ile2), converting the codon specificity from AUG to AUA. In Thermoplasma volcanium (strain ATCC 51530 / DSM 4299 / JCM 9571 / NBRC 15438 / GSS1), this protein is tRNA(Ile2) 2-agmatinylcytidine synthetase TiaS.